The following is a 504-amino-acid chain: Maturase K (504 aa).

It belongs to the intron maturase 2 family. MatK subfamily.

It is found in the plastid. The protein localises to the chloroplast. Its function is as follows. Usually encoded in the trnK tRNA gene intron. Probably assists in splicing its own and other chloroplast group II introns. The polypeptide is Maturase K (Olimarabidopsis pumila (Dwarf rocket)).